A 626-amino-acid chain; its full sequence is Chaperone protein HtpG (626 aa).

Residues 1–341 (METKQFKAES…SEDLSLNISR (341 aa)) form an a; substrate-binding region. The tract at residues 342-552 (EILQHDRQLK…EGELSIEMEK (211 aa)) is b. The interval 490 to 509 (DLGIEGEEKENTSNSDDKEN) is disordered. Residues 498-509 (KENTSNSDDKEN) are compositionally biased toward basic and acidic residues. Residues 553–626 (VLNAMPNNQN…FTNNICKIMK (74 aa)) form a c region.

Belongs to the heat shock protein 90 family. As to quaternary structure, homodimer.

The protein localises to the cytoplasm. Functionally, molecular chaperone. Has ATPase activity. This is Chaperone protein HtpG from Clostridium botulinum (strain ATCC 19397 / Type A).